The chain runs to 189 residues: Rho-related protein racM (189 aa).

Residue 12 to 19 (GDYGVGKT) coordinates GTP. An Effector region motif is present at residues 35–43 (YVPTALDNF). GTP is bound by residues 60–64 (DTAGG) and 118–121 (TKID). C186 carries the post-translational modification Cysteine methyl ester. C186 carries S-geranylgeranyl cysteine lipidation. A propeptide spans 187-189 (IIL) (removed in mature form).

The protein belongs to the small GTPase superfamily. Rho family.

It is found in the cell membrane. This chain is Rho-related protein racM (racM), found in Dictyostelium discoideum (Social amoeba).